A 592-amino-acid polypeptide reads, in one-letter code: Membrane protein insertase YidC (592 aa).

5 helical membrane passes run 8–28, 363–385, 430–450, 493–513, and 531–551; these read LFIA…FVMG, ALGQ…MFPL, INPL…FALY, IWLI…GLTM, and IFAF…AGLV.

Belongs to the OXA1/ALB3/YidC family. Type 1 subfamily. In terms of assembly, interacts with the Sec translocase complex via SecD. Specifically interacts with transmembrane segments of nascent integral membrane proteins during membrane integration.

It is found in the cell inner membrane. Its function is as follows. Required for the insertion and/or proper folding and/or complex formation of integral membrane proteins into the membrane. Involved in integration of membrane proteins that insert both dependently and independently of the Sec translocase complex, as well as at least some lipoproteins. Aids folding of multispanning membrane proteins. The protein is Membrane protein insertase YidC of Maricaulis maris (strain MCS10) (Caulobacter maris).